Consider the following 386-residue polypeptide: Ribosomal RNA small subunit methyltransferase H (386 aa).

Residues 97 to 99 (GGH), Asp-116, Tyr-143, Asp-167, and Gln-174 contribute to the S-adenosyl-L-methionine site.

This sequence belongs to the methyltransferase superfamily. RsmH family.

It localises to the cytoplasm. It catalyses the reaction cytidine(1402) in 16S rRNA + S-adenosyl-L-methionine = N(4)-methylcytidine(1402) in 16S rRNA + S-adenosyl-L-homocysteine + H(+). Specifically methylates the N4 position of cytidine in position 1402 (C1402) of 16S rRNA. In Mycobacterium avium (strain 104), this protein is Ribosomal RNA small subunit methyltransferase H.